The sequence spans 348 residues: MFQSRFTILIRTLNSSKSRHFSSTIEPTKPQFPQTLAGLRARLAAESPSLSEFSDLQSNNSYSVEVGTKKKPLPKPKWMREAIPGGDKYVQIKKKLRELKLHTVCEEAKCPNLGECWSGGETGTATATIMILGDTCTRGCRFCNVKTSRTPPPPDPDEPANVAEAIASWGLDYVVITSVDRDDLPDQGSNHFAQTVQKLKALKPHMLIEALVPDFRGDPGCVENVAKSGLDVFAHNIETVEDLQSVIRDHRANFKQSLDVLMMAKDHAPKGTLTKTSIMLGCGETPEQVVKTMEKVRAAGVDVMTFGQYMRPSKRHMPVSEYVTPEAFEQYRTXXLVSYVLFSLLISV.

[4Fe-4S] cluster is bound by residues C105, C110, C116, C136, C140, and C143. A Radical SAM core domain is found at 121 to 341 (ETGTATATIM…RTXXLVSYVL (221 aa)).

This sequence belongs to the radical SAM superfamily. Lipoyl synthase family. It depends on [4Fe-4S] cluster as a cofactor.

Its subcellular location is the mitochondrion. It catalyses the reaction [[Fe-S] cluster scaffold protein carrying a second [4Fe-4S](2+) cluster] + N(6)-octanoyl-L-lysyl-[protein] + 2 oxidized [2Fe-2S]-[ferredoxin] + 2 S-adenosyl-L-methionine + 4 H(+) = [[Fe-S] cluster scaffold protein] + N(6)-[(R)-dihydrolipoyl]-L-lysyl-[protein] + 4 Fe(3+) + 2 hydrogen sulfide + 2 5'-deoxyadenosine + 2 L-methionine + 2 reduced [2Fe-2S]-[ferredoxin]. The protein operates within protein modification; protein lipoylation via endogenous pathway; protein N(6)-(lipoyl)lysine from octanoyl-[acyl-carrier-protein]: step 2/2. Catalyzes the radical-mediated insertion of two sulfur atoms into the C-6 and C-8 positions of the octanoyl moiety bound to the lipoyl domains of lipoate-dependent enzymes, thereby converting the octanoylated domains into lipoylated derivatives. This is Lipoyl synthase, mitochondrial (LIP1) from Ricinus communis (Castor bean).